The primary structure comprises 140 residues: uncharacterized protein (140 aa).

Residues 80–115 form a disordered region; that stretch reads KNGTRRHALPSPLEGSFQPGRQIPPPQTPSTDPQTL.

This is an uncharacterized protein from Homo sapiens (Human).